We begin with the raw amino-acid sequence, 286 residues long: tRNA (guanine-N(7)-)-methyltransferase (286 aa).

2 positions are modified to phosphoserine: Ser-7 and Ser-59. S-adenosyl-L-methionine is bound by residues Gly-103, Glu-126–Ile-127, Asn-161–Ala-162, and Cys-181. Asp-184 is a catalytic residue. S-adenosyl-L-methionine is bound at residue Thr-259 to Glu-261.

Belongs to the class I-like SAM-binding methyltransferase superfamily. TrmB family. Forms a complex with TRM82.

The protein localises to the nucleus. It carries out the reaction guanosine(46) in tRNA + S-adenosyl-L-methionine = N(7)-methylguanosine(46) in tRNA + S-adenosyl-L-homocysteine. Its pathway is tRNA modification; N(7)-methylguanine-tRNA biosynthesis. Methyltransferase that catalyzes the formation of N(7)-methylguanine at position 46 (m7G46) in tRNA, a modification required to maintain stability of tRNAs; its absence resulting in tRNA decay. Both the D-stem and T-stem structures of tRNAs are required for efficient methyltransferase activity. The protein is tRNA (guanine-N(7)-)-methyltransferase of Saccharomyces cerevisiae (strain RM11-1a) (Baker's yeast).